The primary structure comprises 169 residues: CKLF-like MARVEL transmembrane domain-containing protein 2A (169 aa).

The next 4 helical transmembrane spans lie at 40–60 (FWLSGHAVFKLLSLGCMISAL), 69–89 (HPVLILLICMEAAICIFFIFL), 98–118 (IPFVFWPMADIFNSLFSCVFL), and 136–156 (YLTAMILMGAAAICSFIDMLL). The MARVEL domain occupies 40-162 (FWLSGHAVFK…DMLLQFQHFR (123 aa)).

Belongs to the chemokine-like factor family.

Its subcellular location is the membrane. The protein is CKLF-like MARVEL transmembrane domain-containing protein 2A (Cmtm2a) of Mus musculus (Mouse).